Consider the following 1938-residue polypeptide: Histone-lysine N-methyltransferase SETD1B (1938 aa).

The span at 1 to 20 shows a compositional bias: basic and acidic residues; the sequence is MSFKEAKPGERGKNPEDHGR. Residues 1 to 44 are disordered; that stretch reads MSFKEAKPGERGKNPEDHGRKQAASWMNGMEAANQPSTSAEKKS. Residues 111 to 199 enclose the RRM domain; the sequence is DEFYVGPVPP…NIIHAELDTK (89 aa). 11 disordered regions span residues 226–357, 369–484, 496–630, 652–688, 916–1125, 1147–1174, 1187–1206, 1327–1373, 1413–1468, 1496–1528, and 1744–1772; these read LDAS…ENTF, FPRT…TRIA, LISS…EVTP, GFPP…VPPP, KEPP…SSPV, HQTA…HKQD, MQQN…NEEE, KTLS…GNSL, FPES…VPHM, ECEF…PKKP, and DEPP…RRSE. 4 stretches are compositionally biased toward polar residues: residues 254–290, 298–312, 375–407, and 446–457; these read VTPN…QGTP, PFSQ…QTTP, LSHS…PQTS, and DSTTEQKASFAQ. Residues 512-531 are compositionally biased toward low complexity; it reads SPISSSSSQLSPIPPYSSSS. 2 stretches are compositionally biased toward polar residues: residues 532 to 546 and 569 to 585; these read HYQD…SSTG and SLCQ…QINQ. Over residues 588–599 the composition is skewed to basic and acidic residues; sequence RKMETLDNKELV. Acidic residues predominate over residues 619–628; sequence EDMEISDDEV. Composition is skewed to acidic residues over residues 976 to 990 and 1054 to 1114; these read SEGE…DDGE and DSSD…EDFF. The span at 1159-1174 shows a compositional bias: basic and acidic residues; that stretch reads KDLDVPLVESKEHKQD. Residues 1329–1343 show a composition bias toward basic and acidic residues; sequence LSEEELPRTPGRDIL. Polar residues-rich tracts occupy residues 1349-1358 and 1441-1453; these read LGKSQSTETI and EPTS…NSVP. A compositionally biased stretch (pro residues) spans 1454-1464; sequence SPIPFASPPRG. Positions 1751–1765 are enriched in polar residues; sequence QGKSIPAQPQASTRA. The short motif at 1770–1775 is the RxxxRR motif element; it reads RSEQRR. Positions 1799–1916 constitute an SET domain; it reads KKIRFCKSHI…VNEEITYDYK (118 aa). Tyr1915 contributes to the S-adenosyl-L-methionine binding site. Residues 1922–1938 form the Post-SET domain; it reads VKIPCLCGAENCRGTLN.

This sequence belongs to the class V-like SAM-binding methyltransferase superfamily. As to quaternary structure, component of the SET1B/COMPASS complex.

The protein resides in the nucleus speckle. The protein localises to the chromosome. It carries out the reaction L-lysyl(4)-[histone H3] + 3 S-adenosyl-L-methionine = N(6),N(6),N(6)-trimethyl-L-lysyl(4)-[histone H3] + 3 S-adenosyl-L-homocysteine + 3 H(+). Its function is as follows. Histone methyltransferase that specifically methylates 'Lys-4' of histone H3, when part of the SET1 histone methyltransferase (HMT) complex, but not if the neighboring 'Lys-9' residue is already methylated. H3 'Lys-4' methylation represents a specific tag for epigenetic transcriptional activation. This chain is Histone-lysine N-methyltransferase SETD1B (setd1b), found in Xenopus laevis (African clawed frog).